A 310-amino-acid polypeptide reads, in one-letter code: Glutaminase (310 aa).

Substrate-binding residues include serine 67, asparagine 118, glutamate 161, asparagine 168, tyrosine 192, tyrosine 244, and valine 262.

This sequence belongs to the glutaminase family. Homotetramer.

It catalyses the reaction L-glutamine + H2O = L-glutamate + NH4(+). This chain is Glutaminase, found in Legionella pneumophila (strain Corby).